Consider the following 210-residue polypeptide: Pyridoxine/pyridoxamine 5'-phosphate oxidase (210 aa).

Substrate contacts are provided by residues 7-10 (RDEY) and lysine 65. FMN is bound by residues 60 to 65 (RMVLLK), 75 to 76 (FT), arginine 81, lysine 82, and glutamine 104. 3 residues coordinate substrate: tyrosine 122, arginine 126, and serine 130. Residues 139–140 (QS) and tryptophan 183 contribute to the FMN site. 189-191 (RLH) is a substrate binding site. Residue arginine 193 participates in FMN binding.

This sequence belongs to the pyridoxamine 5'-phosphate oxidase family. As to quaternary structure, homodimer. FMN serves as cofactor.

It catalyses the reaction pyridoxamine 5'-phosphate + O2 + H2O = pyridoxal 5'-phosphate + H2O2 + NH4(+). The catalysed reaction is pyridoxine 5'-phosphate + O2 = pyridoxal 5'-phosphate + H2O2. The protein operates within cofactor metabolism; pyridoxal 5'-phosphate salvage; pyridoxal 5'-phosphate from pyridoxamine 5'-phosphate: step 1/1. It participates in cofactor metabolism; pyridoxal 5'-phosphate salvage; pyridoxal 5'-phosphate from pyridoxine 5'-phosphate: step 1/1. Catalyzes the oxidation of either pyridoxine 5'-phosphate (PNP) or pyridoxamine 5'-phosphate (PMP) into pyridoxal 5'-phosphate (PLP). The chain is Pyridoxine/pyridoxamine 5'-phosphate oxidase from Haemophilus influenzae (strain 86-028NP).